We begin with the raw amino-acid sequence, 197 residues long: RNA pyrophosphohydrolase (197 aa).

In terms of domain architecture, Nudix hydrolase spans 6-154; sequence GYRPNVGIVL…KREVYQLALS (149 aa). The Nudix box signature appears at 38-59; the sequence is GGIQHGESPEQAMYRELHEEVG.

Belongs to the Nudix hydrolase family. RppH subfamily. A divalent metal cation is required as a cofactor.

Accelerates the degradation of transcripts by removing pyrophosphate from the 5'-end of triphosphorylated RNA, leading to a more labile monophosphorylated state that can stimulate subsequent ribonuclease cleavage. This Polynucleobacter necessarius subsp. necessarius (strain STIR1) protein is RNA pyrophosphohydrolase.